Reading from the N-terminus, the 305-residue chain is Sulfate adenylyltransferase subunit 2 (305 aa).

The protein belongs to the PAPS reductase family. CysD subfamily. In terms of assembly, heterodimer composed of CysD, the smaller subunit, and CysN.

It carries out the reaction sulfate + ATP + H(+) = adenosine 5'-phosphosulfate + diphosphate. It functions in the pathway sulfur metabolism; hydrogen sulfide biosynthesis; sulfite from sulfate: step 1/3. Its function is as follows. With CysN forms the ATP sulfurylase (ATPS) that catalyzes the adenylation of sulfate producing adenosine 5'-phosphosulfate (APS) and diphosphate, the first enzymatic step in sulfur assimilation pathway. APS synthesis involves the formation of a high-energy phosphoric-sulfuric acid anhydride bond driven by GTP hydrolysis by CysN coupled to ATP hydrolysis by CysD. The protein is Sulfate adenylyltransferase subunit 2 of Pseudomonas savastanoi pv. phaseolicola (strain 1448A / Race 6) (Pseudomonas syringae pv. phaseolicola (strain 1448A / Race 6)).